The chain runs to 421 residues: uncharacterized protein (421 aa).

This is an uncharacterized protein from Bacillus subtilis (strain 168).